The sequence spans 338 residues: Holliday junction branch migration complex subunit RuvB (338 aa).

The segment at 1–181 (MTRTITPSIT…FGVISRLEFY (181 aa)) is large ATPase domain (RuvB-L). ATP is bound by residues Leu20, Arg21, Gly62, Lys65, Thr66, Thr67, 128-130 (EDF), Arg171, Tyr181, and Arg218. Thr66 serves as a coordination point for Mg(2+). The segment at 182–252 (TDEELAFIIT…VVQDALALLE (71 aa)) is small ATPAse domain (RuvB-S). The tract at residues 255–338 (EMGFDQMDRM…VPEPPQGKLF (84 aa)) is head domain (RuvB-H). DNA contacts are provided by Arg310 and Arg315.

The protein belongs to the RuvB family. In terms of assembly, homohexamer. Forms an RuvA(8)-RuvB(12)-Holliday junction (HJ) complex. HJ DNA is sandwiched between 2 RuvA tetramers; dsDNA enters through RuvA and exits via RuvB. An RuvB hexamer assembles on each DNA strand where it exits the tetramer. Each RuvB hexamer is contacted by two RuvA subunits (via domain III) on 2 adjacent RuvB subunits; this complex drives branch migration. In the full resolvosome a probable DNA-RuvA(4)-RuvB(12)-RuvC(2) complex forms which resolves the HJ.

The protein resides in the cytoplasm. It carries out the reaction ATP + H2O = ADP + phosphate + H(+). The RuvA-RuvB-RuvC complex processes Holliday junction (HJ) DNA during genetic recombination and DNA repair, while the RuvA-RuvB complex plays an important role in the rescue of blocked DNA replication forks via replication fork reversal (RFR). RuvA specifically binds to HJ cruciform DNA, conferring on it an open structure. The RuvB hexamer acts as an ATP-dependent pump, pulling dsDNA into and through the RuvAB complex. RuvB forms 2 homohexamers on either side of HJ DNA bound by 1 or 2 RuvA tetramers; 4 subunits per hexamer contact DNA at a time. Coordinated motions by a converter formed by DNA-disengaged RuvB subunits stimulates ATP hydrolysis and nucleotide exchange. Immobilization of the converter enables RuvB to convert the ATP-contained energy into a lever motion, pulling 2 nucleotides of DNA out of the RuvA tetramer per ATP hydrolyzed, thus driving DNA branch migration. The RuvB motors rotate together with the DNA substrate, which together with the progressing nucleotide cycle form the mechanistic basis for DNA recombination by continuous HJ branch migration. Branch migration allows RuvC to scan DNA until it finds its consensus sequence, where it cleaves and resolves cruciform DNA. This Geotalea uraniireducens (strain Rf4) (Geobacter uraniireducens) protein is Holliday junction branch migration complex subunit RuvB.